The sequence spans 70 residues: ATP synthase subunit c (70 aa).

The next 2 membrane-spanning stretches (helical) occupy residues 4–24 and 45–65; these read IAAA…NGLI and LMFI…VIAF.

The protein belongs to the ATPase C chain family. F-type ATPases have 2 components, F(1) - the catalytic core - and F(0) - the membrane proton channel. F(1) has five subunits: alpha(3), beta(3), gamma(1), delta(1), epsilon(1). F(0) has three main subunits: a(1), b(2) and c(10-14). The alpha and beta chains form an alternating ring which encloses part of the gamma chain. F(1) is attached to F(0) by a central stalk formed by the gamma and epsilon chains, while a peripheral stalk is formed by the delta and b chains.

The protein localises to the cell membrane. Functionally, f(1)F(0) ATP synthase produces ATP from ADP in the presence of a proton or sodium gradient. F-type ATPases consist of two structural domains, F(1) containing the extramembraneous catalytic core and F(0) containing the membrane proton channel, linked together by a central stalk and a peripheral stalk. During catalysis, ATP synthesis in the catalytic domain of F(1) is coupled via a rotary mechanism of the central stalk subunits to proton translocation. The chain is ATP synthase subunit c from Bacillus pumilus (strain SAFR-032).